Reading from the N-terminus, the 249-residue chain is 2,3-bisphosphoglycerate-dependent phosphoglycerate mutase (249 aa).

Substrate-binding positions include 8–15 (RHGESVWN), 21–22 (TG), arginine 60, 87–90 (ERHY), lysine 98, 114–115 (RR), and 183–184 (GN). Histidine 9 (tele-phosphohistidine intermediate) is an active-site residue. The active-site Proton donor/acceptor is the glutamate 87.

It belongs to the phosphoglycerate mutase family. BPG-dependent PGAM subfamily.

The catalysed reaction is (2R)-2-phosphoglycerate = (2R)-3-phosphoglycerate. Its pathway is carbohydrate degradation; glycolysis; pyruvate from D-glyceraldehyde 3-phosphate: step 3/5. Its function is as follows. Catalyzes the interconversion of 2-phosphoglycerate and 3-phosphoglycerate. The polypeptide is 2,3-bisphosphoglycerate-dependent phosphoglycerate mutase (Chloroherpeton thalassium (strain ATCC 35110 / GB-78)).